A 335-amino-acid polypeptide reads, in one-letter code: MKLVDAYVFLEELGSLLYKLLEQRDKLREEGYPVPGREVATPLVKYGFVSMLKGGVIMDVTNPEQAIIAEEAGAVGVMVLDKLPYDVRMAGGVARTADVKVIEEVMSSITIPVSAKCRIGHEFEARVLEEVGVDLIDESEVLTPVDEKAHINKWLFKTPFVNGARSLPEALRRIYEGASMIRTKGEPGTGNVAEAVKHIKIVNRDIYMLNGYYRNGDVEAIWVYSKENRVPYELALLTARLGRLPVVNFAAGGIATPADAALMMWLGADGVFVGSGIFKSNDPEARARGIVLATTYWDDPETVLEAQKMVSEKASMLGIDIRRLKPEELMQERGV.

Residue D59 participates in D-ribose 5-phosphate binding. K116 acts as the Schiff-base intermediate with D-ribose 5-phosphate in catalysis. Position 188 (G188) interacts with D-ribose 5-phosphate. K200 lines the D-glyceraldehyde 3-phosphate pocket. D-ribose 5-phosphate contacts are provided by residues G253 and 274-275 (GS).

Belongs to the PdxS/SNZ family. In the presence of PdxT, forms a dodecamer of heterodimers.

The catalysed reaction is aldehydo-D-ribose 5-phosphate + D-glyceraldehyde 3-phosphate + L-glutamine = pyridoxal 5'-phosphate + L-glutamate + phosphate + 3 H2O + H(+). The protein operates within cofactor biosynthesis; pyridoxal 5'-phosphate biosynthesis. In terms of biological role, catalyzes the formation of pyridoxal 5'-phosphate from ribose 5-phosphate (RBP), glyceraldehyde 3-phosphate (G3P) and ammonia. The ammonia is provided by the PdxT subunit. Can also use ribulose 5-phosphate and dihydroxyacetone phosphate as substrates, resulting from enzyme-catalyzed isomerization of RBP and G3P, respectively. In Desulfurococcus amylolyticus (strain DSM 18924 / JCM 16383 / VKM B-2413 / 1221n) (Desulfurococcus kamchatkensis), this protein is Pyridoxal 5'-phosphate synthase subunit PdxS.